The chain runs to 396 residues: N-terminal EF-hand calcium-binding protein 3 (396 aa).

Positions 14–34 (PPAPQPQPQTPRHPQLAPDPG) are enriched in pro residues. Residues 14–36 (PPAPQPQPQTPRHPQLAPDPGPA) form a disordered region. Positions 36-71 (AGHTLFQDVFRRADKNDDGKLSFEEFQNYFADGVLS) constitute an EF-hand domain. Residues D49, N51, D53, K55, and E60 each coordinate Ca(2+). The required for interaction with APBA3 stretch occupies residues 181–190 (VEAQSRLCGS). Residues 197–220 (ALRSVSRSSTWSPGSSDTGRSSEA) form a disordered region. Residues 206 to 217 (TWSPGSSDTGRS) are compositionally biased toward polar residues. An ABM domain is found at 296-385 (LMAQRQVQVA…RAPDTLTTVF (90 aa)).

As to quaternary structure, interacts with the N-terminal domain of APBA2. Interacts with NEK2. Interacts with APBA3; APBA3 seems to mediate the interaction between NECAB3 and HIF1AN. In terms of processing, phosphorylated by NEK2. As to expression, strongly expressed in heart and skeletal muscle, moderately in brain and pancreas.

Its subcellular location is the golgi apparatus. Functionally, inhibits the interaction of APBA2 with amyloid-beta precursor protein (APP), and hence allows formation of amyloid-beta. May enhance the activity of HIF1A and thus promote glycolysis under normoxic conditions; the function requires its ABM domain and may implicate the stabilization of the interaction between HIF1AN and APBA3. This Homo sapiens (Human) protein is N-terminal EF-hand calcium-binding protein 3 (NECAB3).